A 2148-amino-acid polypeptide reads, in one-letter code: MNHVTIKQSDTRADPFRVFIFGDQSSCNLSNLQLLLFKKSNVYLASFIDQVNLTLRHEIARLTAAERQSFPAFSSVQNLVARALKKDTSVALESTLATIYHLCCFINYFGDGQEAYPTGPTTHVSGLCIGALAAAAVSSSKSLAELVQAGIDAVRVSLKVGLLVARTAALFSHQESNGTSSSPWSYALPDSQLPLALAEEAIESYQAKTNIPPLSLPYISAKGQNSWTVSGPPAIVQHFLETSQFEKTLRLTPLAVHAPYHAPHIFSAIDVQHIIRAVGPVSSFSSKLSFISSSSSRNLPTGLKFQDLLYRAVEDILILPLDLREAAENIRLVLEATDNVQQCALFPISTGVGPSLKQSFSPAMASRVSIVDCIMERVAADAGPKSTSGPKPSESKIAIIGMSGRFPESADVEAFWDLLHQGLDVHRPVPPDRFNGELYYDVTGKRKNTCKVMHGCWINDPGLFDAKFFNISPKEAEQSDPGQRLALATAYEALEAAGVVADRTPSTQRDRVGVFYGMTSDDYREVSCGQNVDTYFIPGGNRAFTPGKINYFFKYCGPSVSVDTACSSSLAAIHLACNSIWRNECDTAIAGGTNVMSNPDSFVGLDRGYFLSRTGNCHTFDDDADGYCRADAVGTVILKRLEDAIADHDPILGVISGALTNHSADAVSITRPHSGAQEEIFSKLLTESGVHPHQVSYIEMHGTGTQAGDATEMTSVLNCFAPSTSPRRLPHESLHLGSTKANVGHSESASGVSALIKVLLMMEKNIIPPHCGIKGKINHKFPTDLDERNVHIAKTATQWNRRNELNNIRRAFVNNFSAAGGNTALLVEDYPLRIADSAQQDARTAHVVTVSAKSIKSLKGNLENLKKFVQKQAFTEGFLPKLSYTTTSRRMHHPFRVAIPAANSEQLLCALDEELKHDSYTCSSESPVAFVFSGQGSQYSAMGQHLLHFTIFRDEVHAYDILAQRHGFPSIMPLIDGSVDIEDLEPLVVQLGTVCVQMALASLWMALGMRPAYVVGHSLGHYAALKVAGVLTASDTIYLVAMRARLLQNKCSRGSHAMLAIRSSAAEIQAHLDEGIHDIACINGPQDTVVSGCIDDIDRLSQKLMDKGIKATRVNVPFAFHSAQVDPILDELEAIASQVEFHAPRVAIGCPLLGKTFTAGETPSLEAKHIRRHCRETVNFLDVLRSAKDDGFVSEKTAWIEIGPHTVCSNLVKANINQDITAVPSLMRNKDGWQVLASSVATLYRHGLSVAWDEYHHDFEACKQVLRLPAYSWDNKLYWIDYVHDWLLTRGDPPVQAAAPLPAPPSSFSTASVHRMVHESVEKGKLTLTAECEFTNEQLREVVYGHVVNGNRVCSSSLYTDFGVTLGSYILEKYRPDLQGHAVDVQDMVVNKALVHKEGPTMLLRIDVVLDTTDSKAASMSIYSVNSKGNKTADHAQSSLHFEQPKVWLKSWDSTQYYVERSIEWLKEKADQGLNSRMSSGVIYKLFSSLVDYSTAYKGMQEAIVNTEDFEATALVRFQVDEGNFRCNPMWVDSCGQLAGFLMNGHAKTPKDQVFINHGWQYFRTVRKFSRDKTYRTYVRMRCVEGTTYAGDVYIFDDEGIVGVCGSITFQGIPRKVLNTAMPPPKSQNEAPVRSGPAKPAAKPPRSASSEHSGHFARHANIEPLKLDAALKSATTARNPMLPVFKIVAEEIGIPSASVDNGLVFADYGVDSLLSLSISGRLREELDLDVESSAFETCATLADLAAQLGLDTFSSDQSSGQSSSSGGLSPRSDSIGEITSSVTTPPSLSPRGSVSGSQCKDVCAILAEEIGVSMGEITNDTDLGALGMDSLMSLAVLSRLREELELDLEGDFFVSHPNFSSFKHMFQQGHGDEVEPEPSAELKQYRATSTLLQGNPKSALYTLFLLPDGSGSSFSYAPINAVRKDVCVFGLNCPWLKSAEKLVQFGLKGLATLYVEEIRRRAPHGPYNLGGWSAGGICAYEAAIQFTREGETVERLILLDSPNPIGLEKLPARLFDFVNGLGLFGDGKAPDWLLAHFLAFIDALDEWKPVPWDKALGGNSPPPMTYILWAEDGICKGTDARPEYRDDDPREMKWLLENRTNFGGNNWDVLLGQQSLSIERIQDANHFTMLRKGKNTERVAAFIRSTFG.

The tract at residues 19 to 261 (FIFGDQSSCN…TPLAVHAPYH (243 aa)) is N-terminal acylcarrier protein transacylase domain (SAT). A Ketosynthase family 3 (KS3) domain is found at 394 to 829 (ESKIAIIGMS…GGNTALLVED (436 aa)). Active-site for beta-ketoacyl synthase activity residues include cysteine 566, histidine 701, and histidine 745. The tract at residues 930–1236 (FVFSGQGSQY…MRNKDGWQVL (307 aa)) is malonyl-CoA:ACP transacylase (MAT) domain. Serine 1018 (for acyl/malonyl transferase activity) is an active-site residue. The product template (PT) domain stretch occupies residues 1310–1624 (TASVHRMVHE…RKVLNTAMPP (315 aa)). An N-terminal hotdog fold region spans residues 1314–1447 (HRMVHESVEK…SSLHFEQPKV (134 aa)). A PKS/mFAS DH domain is found at 1314-1619 (HRMVHESVEK…FQGIPRKVLN (306 aa)). Histidine 1346 (proton acceptor; for dehydratase activity) is an active-site residue. Positions 1474-1619 (LNSRMSSGVI…FQGIPRKVLN (146 aa)) are C-terminal hotdog fold. The active-site Proton donor; for dehydratase activity is the aspartate 1533. The disordered stretch occupies residues 1619 to 1655 (NTAMPPPKSQNEAPVRSGPAKPAAKPPRSASSEHSGH). Residues 1634–1650 (RSGPAKPAAKPPRSASS) show a composition bias toward low complexity. The Carrier 1 domain occupies 1678-1752 (RNPMLPVFKI…DLAAQLGLDT (75 aa)). Serine 1712 carries the post-translational modification O-(pantetheine 4'-phosphoryl)serine. Positions 1755–1790 (SDQSSGQSSSSGGLSPRSDSIGEITSSVTTPPSLSP) are enriched in low complexity. Residues 1755-1796 (SDQSSGQSSSSGGLSPRSDSIGEITSSVTTPPSLSPRGSVSG) form a disordered region. Positions 1793–1870 (SVSGSQCKDV…SFKHMFQQGH (78 aa)) constitute a Carrier 2 domain. Serine 1830 carries the post-translational modification O-(pantetheine 4'-phosphoryl)serine. Positions 1882 to 2146 (LKQYRATSTL…ERVAAFIRST (265 aa)) are thioesterase (TE) domain. Serine 1973 acts as the For thioesterase activity in catalysis.

It functions in the pathway pigment biosynthesis. In terms of biological role, polyketide synthase; part of the Pks1 gene cluster that mediates the biosynthesis of an anthraquinone derivative pigment that contributes to conidial pigmentation that provides protection from UV radiation, heat and cold stress. The polyketide synthase Pks1 produces 1-acetyl-2,4,6,8-tetrahydroxy-9,10-anthraquinone though condensation of acetyl-CoA with malonyl-CoA. The dehydratase EthD and the laccase Mlac1 further convert the anthraquinone derivative into the final conidial pigment. The protein is Polyketide synthase 1 of Metarhizium robertsii (strain ARSEF 23 / ATCC MYA-3075) (Metarhizium anisopliae (strain ARSEF 23)).